The primary structure comprises 579 residues: Tetratricopeptide repeat protein 39C (579 aa).

Polar residues predominate over residues 182 to 197; that stretch reads QQGALASDQANHNTST. A disordered region spans residues 182–202; sequence QQGALASDQANHNTSTGSGGR. 3 TPR repeats span residues 311 to 344, 349 to 382, and 481 to 514; these read SLFI…ASDQ, HVCL…SRWS, and GLKH…EYGR.

The protein belongs to the TTC39 family.

In Danio rerio (Zebrafish), this protein is Tetratricopeptide repeat protein 39C (ttc39c).